The following is a 360-amino-acid chain: 3-isopropylmalate dehydrogenase (360 aa).

Position 76–89 (76–89 (GPKWDTIERDIRPE)) interacts with NAD(+). Substrate contacts are provided by Arg96, Arg106, Arg134, and Asp224. 3 residues coordinate Mg(2+): Asp224, Asp248, and Asp252. Residue 282–294 (GSAPDIAGKGIAN) participates in NAD(+) binding.

Belongs to the isocitrate and isopropylmalate dehydrogenases family. LeuB type 1 subfamily. In terms of assembly, homodimer. The cofactor is Mg(2+). It depends on Mn(2+) as a cofactor.

It localises to the cytoplasm. It catalyses the reaction (2R,3S)-3-isopropylmalate + NAD(+) = 4-methyl-2-oxopentanoate + CO2 + NADH. It functions in the pathway amino-acid biosynthesis; L-leucine biosynthesis; L-leucine from 3-methyl-2-oxobutanoate: step 3/4. Functionally, catalyzes the oxidation of 3-carboxy-2-hydroxy-4-methylpentanoate (3-isopropylmalate) to 3-carboxy-4-methyl-2-oxopentanoate. The product decarboxylates to 4-methyl-2 oxopentanoate. This is 3-isopropylmalate dehydrogenase from Pseudomonas fluorescens (strain Pf0-1).